The following is a 612-amino-acid chain: Chaperone protein DnaK (612 aa).

At Thr173 the chain carries Phosphothreonine; by autocatalysis. Residues 524–544 (DDKVSEEDKQKAESAKDELKQ) are compositionally biased toward basic and acidic residues. Disordered regions lie at residues 524 to 560 (DDKVSEEDKQKAESAKDELKQALESGDMEQVKAKKDA) and 572 to 612 (LYEQ…DDKK). Residues 574 to 586 (EQVQQEAQQASGE) are compositionally biased toward low complexity. The segment covering 587–612 (QGEESGNQDDDVVDADYSEVDDDDKK) has biased composition (acidic residues).

It belongs to the heat shock protein 70 family.

In terms of biological role, acts as a chaperone. The sequence is that of Chaperone protein DnaK from Oceanobacillus iheyensis (strain DSM 14371 / CIP 107618 / JCM 11309 / KCTC 3954 / HTE831).